Consider the following 695-residue polypeptide: Elongation factor G (695 aa).

The tr-type G domain maps to 12 to 286 (DKLRNIGIMA…AVIDYLPSPL (275 aa)). GTP is bound by residues 21-28 (AHIDAGKT), 85-89 (DTPGH), and 139-142 (NKMD).

It belongs to the TRAFAC class translation factor GTPase superfamily. Classic translation factor GTPase family. EF-G/EF-2 subfamily.

It is found in the cytoplasm. Functionally, catalyzes the GTP-dependent ribosomal translocation step during translation elongation. During this step, the ribosome changes from the pre-translocational (PRE) to the post-translocational (POST) state as the newly formed A-site-bound peptidyl-tRNA and P-site-bound deacylated tRNA move to the P and E sites, respectively. Catalyzes the coordinated movement of the two tRNA molecules, the mRNA and conformational changes in the ribosome. The chain is Elongation factor G from Thermotoga sp. (strain RQ2).